Here is a 495-residue protein sequence, read N- to C-terminus: UDP-glycosyltransferase 73C13 (495 aa).

H24 (proton acceptor) is an active-site residue. H24 is an an anthocyanidin binding site. The Charge relay role is filled by D129. Positions 356, 358, 373, 376, 377, 378, and 381 each coordinate UDP-alpha-D-glucose. A396 contributes to the an anthocyanidin binding site. Residues D397 and Q398 each coordinate UDP-alpha-D-glucose.

This sequence belongs to the UDP-glycosyltransferase family.

It carries out the reaction oleanolate + UDP-alpha-D-glucose = oleanolate 3-O-beta-D-glucoside + UDP + H(+). Its function is as follows. Catalyzes the transfer of a glucose (Glc) moiety from UDP-Glc to the C-3 position of the oleanane sapogenins oleanolate and hederagenin, and to the C-28 carboxylic group of the lupane sapogenin betulinate. The monoglucosylated hederagenin 3-O-beta-D-glucoside is a feeding deterrent of the yellow-striped flea beetle (Phyllotreta nemorum). The protein is UDP-glycosyltransferase 73C13 of Barbarea vulgaris (Yellow rocket).